The following is a 131-amino-acid chain: Global transcriptional regulator Spx (131 aa).

Cys-10 and Cys-13 are joined by a disulfide.

Belongs to the ArsC family. Spx subfamily. Interacts with the C-terminal domain of the alpha subunit of the RNAP.

Its subcellular location is the cytoplasm. With respect to regulation, under non-stress conditions, Spx is degraded by ClpXP. Efficient degradation by ClpXP requires the adapter protein SpxH/YjbH. Function, levels and solubility of Spx are affected by SpxH/YjbH aggregation and stress conditions. Its function is as follows. Global transcriptional regulator that plays a key role in stress response and exerts either positive or negative regulation of genes. Acts by interacting with the C-terminal domain of the alpha subunit of the RNA polymerase (RNAP). This interaction can enhance binding of RNAP to the promoter region of target genes and stimulate their transcription, or block interaction of RNAP with activator proteins and repress transcription. Functionally, required for transcription of thioredoxin reductase (trxB). Modulates the expression of icaR, encoding a repressor of the biofilm operon icaADBC. Also controls the transcription of trfA, a gene implicated in cell wall antibiotic resistance, which in turn is required for degradation of MazE antitoxin, the unstable component of the MazEF toxin-antitoxin system, that neutralizes the endoribonuclease activity of MazF toxin. In Staphylococcus aureus (strain NCTC 8325 / PS 47), this protein is Global transcriptional regulator Spx.